A 614-amino-acid polypeptide reads, in one-letter code: DNA mismatch repair protein MutL (614 aa).

The protein belongs to the DNA mismatch repair MutL/HexB family.

In terms of biological role, this protein is involved in the repair of mismatches in DNA. It is required for dam-dependent methyl-directed DNA mismatch repair. May act as a 'molecular matchmaker', a protein that promotes the formation of a stable complex between two or more DNA-binding proteins in an ATP-dependent manner without itself being part of a final effector complex. This Leptospira biflexa serovar Patoc (strain Patoc 1 / ATCC 23582 / Paris) protein is DNA mismatch repair protein MutL.